Consider the following 366-residue polypeptide: Alanine racemase (366 aa).

Residue Lys40 is the Proton acceptor; specific for D-alanine of the active site. An N6-(pyridoxal phosphate)lysine modification is found at Lys40. Arg136 contributes to the substrate binding site. Tyr263 (proton acceptor; specific for L-alanine) is an active-site residue. Met310 serves as a coordination point for substrate.

It belongs to the alanine racemase family. It depends on pyridoxal 5'-phosphate as a cofactor.

The catalysed reaction is L-alanine = D-alanine. Its pathway is amino-acid biosynthesis; D-alanine biosynthesis; D-alanine from L-alanine: step 1/1. Catalyzes the interconversion of L-alanine and D-alanine. May also act on other amino acids. In Streptococcus equi subsp. equi (strain 4047), this protein is Alanine racemase (alr).